The following is a 1000-amino-acid chain: Vacuolar sorting protein 39 (1000 aa).

Positions 16–282 (PARIDAVESY…RRLVKSNNAV (267 aa)) constitute a CNH domain. Residues 394–413 (DEASLSRGSSGISDDMESSS) form a disordered region. Residues 607 to 796 (YSMLVLESCP…YLNPKKSAKD (190 aa)) form a CHCR repeat. Positions 844 to 864 (GLSSSTDSGRSDVDTEEPLEE) are disordered.

It belongs to the VAM6/VPS39 family. In terms of assembly, homooligomer. Component of the homotypic fusion and vacuole protein sorting (HOPS) complex composed of the class C Vps core proteins VPS11, VCL1, VPS18 and VPS33, which in HOPS further associates with VPS39 and VPS41. Interacts directly with VPS11. Binds to RABG3B.

It is found in the cytoplasm. It localises to the vacuole membrane. In terms of biological role, essential protein required during embryogenesis. Believed to act in part as a component of the putative HOPS endosomal tethering complex. HOPS is required for the central vacuole formation. May play a role in clustering and fusion of late endosomes and lysosomes. Plays a role in vesicle-mediated protein trafficking to lysosomal compartments including the endocytic membrane transport and autophagic pathways. Required for fusion of endosomes and autophagosomes with lysosomes. This is Vacuolar sorting protein 39 from Arabidopsis thaliana (Mouse-ear cress).